A 546-amino-acid chain; its full sequence is Chaperonin GroEL (546 aa).

Residues 30-33 (TLGP), Lys-51, 87-91 (DGTTT), Gly-415, 479-481 (NAA), and Asp-495 contribute to the ATP site. A disordered region spans residues 527–546 (DESAAPAMPGGMGGMGDMGM). Residues 536–546 (GGMGGMGDMGM) show a composition bias toward gly residues.

It belongs to the chaperonin (HSP60) family. Forms a cylinder of 14 subunits composed of two heptameric rings stacked back-to-back. Interacts with the co-chaperonin GroES.

It is found in the cytoplasm. The enzyme catalyses ATP + H2O + a folded polypeptide = ADP + phosphate + an unfolded polypeptide.. Its function is as follows. Together with its co-chaperonin GroES, plays an essential role in assisting protein folding. The GroEL-GroES system forms a nano-cage that allows encapsulation of the non-native substrate proteins and provides a physical environment optimized to promote and accelerate protein folding. The chain is Chaperonin GroEL from Acidovorax sp. (strain JS42).